The chain runs to 207 residues: Thiamine-phosphate synthase (207 aa).

Residues 37–41 and N69 contribute to the 4-amino-2-methyl-5-(diphosphooxymethyl)pyrimidine site; that span reads QLREK. The Mg(2+) site is built by D70 and D89. A 4-amino-2-methyl-5-(diphosphooxymethyl)pyrimidine-binding site is contributed by S108. Residue 134 to 136 coordinates 2-[(2R,5Z)-2-carboxy-4-methylthiazol-5(2H)-ylidene]ethyl phosphate; it reads TGS. Residue K137 coordinates 4-amino-2-methyl-5-(diphosphooxymethyl)pyrimidine. 2-[(2R,5Z)-2-carboxy-4-methylthiazol-5(2H)-ylidene]ethyl phosphate contacts are provided by residues G165 and 185-186; that span reads IS.

Belongs to the thiamine-phosphate synthase family. Mg(2+) is required as a cofactor.

The catalysed reaction is 2-[(2R,5Z)-2-carboxy-4-methylthiazol-5(2H)-ylidene]ethyl phosphate + 4-amino-2-methyl-5-(diphosphooxymethyl)pyrimidine + 2 H(+) = thiamine phosphate + CO2 + diphosphate. It carries out the reaction 2-(2-carboxy-4-methylthiazol-5-yl)ethyl phosphate + 4-amino-2-methyl-5-(diphosphooxymethyl)pyrimidine + 2 H(+) = thiamine phosphate + CO2 + diphosphate. It catalyses the reaction 4-methyl-5-(2-phosphooxyethyl)-thiazole + 4-amino-2-methyl-5-(diphosphooxymethyl)pyrimidine + H(+) = thiamine phosphate + diphosphate. Its pathway is cofactor biosynthesis; thiamine diphosphate biosynthesis; thiamine phosphate from 4-amino-2-methyl-5-diphosphomethylpyrimidine and 4-methyl-5-(2-phosphoethyl)-thiazole: step 1/1. Functionally, condenses 4-methyl-5-(beta-hydroxyethyl)thiazole monophosphate (THZ-P) and 2-methyl-4-amino-5-hydroxymethyl pyrimidine pyrophosphate (HMP-PP) to form thiamine monophosphate (TMP). This is Thiamine-phosphate synthase from Desulfitobacterium hafniense (strain DSM 10664 / DCB-2).